The following is a 37-amino-acid chain: Cytochrome b6-f complex subunit 5 (37 aa).

A helical transmembrane segment spans residues 5-25; that stretch reads LLSGIVLGLVPVTITGLFVAA.

Belongs to the PetG family. As to quaternary structure, the 4 large subunits of the cytochrome b6-f complex are cytochrome b6, subunit IV (17 kDa polypeptide, PetD), cytochrome f and the Rieske protein, while the 4 small subunits are PetG, PetL, PetM and PetN. The complex functions as a dimer.

Its subcellular location is the plastid. The protein resides in the chloroplast thylakoid membrane. Functionally, component of the cytochrome b6-f complex, which mediates electron transfer between photosystem II (PSII) and photosystem I (PSI), cyclic electron flow around PSI, and state transitions. PetG is required for either the stability or assembly of the cytochrome b6-f complex. This chain is Cytochrome b6-f complex subunit 5, found in Emiliania huxleyi (Coccolithophore).